The chain runs to 1260 residues: Phosphatidylinositol 3,4,5-trisphosphate 5-phosphatase 2 (1260 aa).

The SH2 domain maps to 25–121; that stretch reads WYHRDLSRAA…GLVCALLLPV (97 aa). Basic and acidic residues predominate over residues 126-136; that stretch reads ELDPPDERDAS. The interval 126-178 is disordered; it reads ELDPPDERDASDGEDEKPPLPPRSGTSVSAPLGPSSPPAAPEPPTPAVESAPN. At serine 136 the chain carries Phosphoserine. Pro residues predominate over residues 159–171; sequence PSSPPAAPEPPTP. Phosphoserine occurs at positions 243 and 355. Tyrosine 888 is modified (phosphotyrosine). The residue at position 892 (serine 892) is a Phosphoserine. The tract at residues 899-1120 is disordered; the sequence is GAKSKAPSVS…FLGEAAGGDD (222 aa). Over residues 940 to 952 the composition is skewed to pro residues; it reads PPPTGRPPAPPRA. The SH3-binding signature appears at 946–951; sequence PPAPPR. Residues 953–967 show a composition bias toward basic and acidic residues; the sequence is APREEPLTPRLKPEG. Phosphothreonine is present on threonine 960. Positions 985 to 988 match the NPXY motif motif; it reads NPAY. At tyrosine 988 the chain carries Phosphotyrosine. Pro residues-rich tracts occupy residues 998-1013, 1050-1061, and 1090-1108; these read LLPP…PVPP, LPPPDFPPPPLP, and LPPP…PLPP. Serine 1133 is subject to Phosphoserine. Tyrosine 1164 is subject to Phosphotyrosine. Residues 1181 to 1200 are disordered; it reads EDLAEEAPCPQAGRTGGLGE. An SAM domain is found at 1198 to 1260; sequence LGEAGMGAWL…LLLDTLQLSK (63 aa). The residue at position 1259 (serine 1259) is a Phosphoserine.

The protein belongs to the inositol 1,4,5-trisphosphate 5-phosphatase family. As to quaternary structure, interacts with tyrosine phosphorylated form of SHC1. Interacts with EGFR. Upon stimulation by the EGF signaling pathway, it forms a complex with SHC1 and EGFR. Interacts with cytoskeletal protein SORBS3/vinexin, promoting its localization to the periphery of cells. Forms a complex with filamin (FLNA or FLNB), actin, GPIb (GP1BA or GP1BB) that regulates cortical and submembraneous actin. Interacts with c-Met/MET, when c-Met/MET is phosphorylated on 'Tyr-1356'. Interacts with p130Cas/BCAR1. Interacts with CENTD3/ARAP3 via its SAM domain. Interacts with c-Cbl/CBL and CAP/SORBS1. Interacts with activated EPHA2 receptor. Interacts with receptor FCGR2A. Interacts with receptor FCGR2B. Interacts with tyrosine kinase ABL1. Interacts with tyrosine kinase TEC. Interacts with CSF1R. Interacts (via N-terminus) with SH3YL1 (via SH3 domain). Interacts with FCRL6 (tyrosine phosphorylated form). Interacts (via SH2 domain) with tyrosine phosphorylated KLRC1 (via ITIM). Interacts with NEDD9/HEF1. Post-translationally, tyrosine phosphorylated by the members of the SRC family after exposure to a diverse array of extracellular stimuli such as insulin, growth factors such as EGF or PDGF, chemokines, integrin ligands and hypertonic and oxidative stress. May be phosphorylated upon IgG receptor FCGR2B-binding. Phosphorylated at Tyr-988 following cell attachment and spreading. Phosphorylated at Tyr-1164 following EGF signaling pathway stimulation. Expressed abundantly in skeletal muscle tissue.

Its subcellular location is the cytoplasm. It localises to the cytosol. It is found in the cytoskeleton. The protein resides in the membrane. The protein localises to the cell projection. Its subcellular location is the filopodium. It localises to the lamellipodium. It is found in the basal cell membrane. The protein resides in the nucleus. The protein localises to the nucleus speckle. Its subcellular location is the spindle pole. It carries out the reaction a 1,2-diacyl-sn-glycero-3-phospho-(1D-myo-inositol-3,4,5-trisphosphate) + H2O = a 1,2-diacyl-sn-glycero-3-phospho-(1D-myo-inositol-3,4-bisphosphate) + phosphate. The catalysed reaction is 1,2-dioctanoyl-sn-glycero-3-phospho-(1D-myo-inositol-3,4,5-trisphosphate) + H2O = 1,2-dioctanoyl-sn-glycero-3-phospho-(1D-myo-inositol-3,4-bisphosphate) + phosphate. The enzyme catalyses 1,2-dihexadecanoyl-sn-glycero-3-phospho-(1D-myo-inositol-3,4,5-trisphosphate) + H2O = 1,2-dihexadecanoyl-sn-glycero-3-phospho-(1D-myo-inositol-3,4-bisphosphate) + phosphate. Its activity is regulated as follows. Activated upon translocation to the sites of synthesis of PtdIns(3,4,5)P3 in the membrane. Enzymatic activity is enhanced in the presence of phosphatidylserine. In terms of biological role, phosphatidylinositol (PtdIns) phosphatase that specifically hydrolyzes the 5-phosphate of phosphatidylinositol-3,4,5-trisphosphate (PtdIns(3,4,5)P3) to produce PtdIns(3,4)P2, thereby negatively regulating the PI3K (phosphoinositide 3-kinase) pathways. Required for correct mitotic spindle orientation and therefore progression of mitosis. Plays a central role in regulation of PI3K-dependent insulin signaling, although the precise molecular mechanisms and signaling pathways remain unclear. While overexpression reduces both insulin-stimulated MAP kinase and Akt activation, its absence does not affect insulin signaling or GLUT4 trafficking. Confers resistance to dietary obesity. May act by regulating AKT2, but not AKT1, phosphorylation at the plasma membrane. Part of a signaling pathway that regulates actin cytoskeleton remodeling. Required for the maintenance and dynamic remodeling of actin structures as well as in endocytosis, having a major impact on ligand-induced EGFR internalization and degradation. Participates in regulation of cortical and submembraneous actin by hydrolyzing PtdIns(3,4,5)P3 thereby regulating membrane ruffling. Regulates cell adhesion and cell spreading. Required for HGF-mediated lamellipodium formation, cell scattering and spreading. Acts as a negative regulator of EPHA2 receptor endocytosis by inhibiting via PI3K-dependent Rac1 activation. Acts as a regulator of neuritogenesis by regulating PtdIns(3,4,5)P3 level and is required to form an initial protrusive pattern, and later, maintain proper neurite outgrowth. Acts as a negative regulator of the FC-gamma-RIIA receptor (FCGR2A). Mediates signaling from the FC-gamma-RIIB receptor (FCGR2B), playing a central role in terminating signal transduction from activating immune/hematopoietic cell receptor systems. Involved in EGF signaling pathway. Upon stimulation by EGF, it is recruited by EGFR and dephosphorylates PtdIns(3,4,5)P3. Plays a negative role in regulating the PI3K-PKB pathway, possibly by inhibiting PKB activity. Down-regulates Fc-gamma-R-mediated phagocytosis in macrophages independently of INPP5D/SHIP1. In macrophages, down-regulates NF-kappa-B-dependent gene transcription by regulating macrophage colony-stimulating factor (M-CSF)-induced signaling. Plays a role in the localization of AURKA and NEDD9/HEF1 to the basolateral membrane at interphase in polarized cysts, thereby mediates cell cycle homeostasis, cell polarization and cilia assembly. Additionally promotion of cilia growth is also facilitated by hydrolysis of (PtdIns(3,4,5)P3) to PtdIns(3,4)P2. Promotes formation of apical membrane-initiation sites during the initial stages of lumen formation via Rho family-induced actin filament organization and CTNNB1 localization to cell-cell contacts. May also hydrolyze PtdIns(1,3,4,5)P4, and could thus affect the levels of the higher inositol polyphosphates like InsP6. Involved in endochondral ossification. The sequence is that of Phosphatidylinositol 3,4,5-trisphosphate 5-phosphatase 2 from Sus scrofa (Pig).